The primary structure comprises 28 residues: Dermaseptin-6TR (28 aa).

In terms of tissue distribution, expressed by the skin glands.

It localises to the secreted. Its function is as follows. Has antimicrobial activity. This Phyllomedusa trinitatis (Trinidad leaf frog) protein is Dermaseptin-6TR.